The primary structure comprises 362 residues: Putative G-protein coupled receptor B0244.5 (362 aa).

Over 1 to 47 the chain is Extracellular; the sequence is MQNIFENCSYHSKYEPYFLNCTNTTNQCVLIQDVGIIQAIDFWANLC. N-linked (GlcNAc...) asparagine glycosylation is found at Asn-7, Asn-20, and Asn-23. Residues 48-68 traverse the membrane as a helical segment; the sequence is IPFTLFVIAFILNGYYLSILI. The Cytoplasmic portion of the chain corresponds to 69 to 81; sequence PEFRKMNDTTKKQ. The chain crosses the membrane as a helical span at residues 82–102; it reads YIFVVSRGISSLSASSIMMVL. Residues 103-125 lie on the Extracellular side of the membrane; the sequence is RLLKMLSTSFTVYFLFFLIDDLS. Residues 126-145 form a helical membrane-spanning segment; that stretch reads FYSLLGSYVGSTLLLYLATV. At 146 to 161 the chain is on the cytoplasmic side; it reads RPIFYSIQISVRIVYK. A helical membrane pass occupies residues 162-182; that stretch reads FALVNVLLAVVLAVTTAIFQA. At 183–204 the chain is on the extracellular side; it reads AEVSDGFFHCDVQHCQPIINIA. A helical transmembrane segment spans residues 205 to 225; that stretch reads MFVIIATSFLIPIITLTFVLV. At 226-255 the chain is on the cytoplasmic side; sequence TLCFQKSRTQSIGNFTVDNSVYKSARTRLA. A helical membrane pass occupies residues 256–276; sequence WTLFTFTLISLTEMIPSSFLV. Topologically, residues 277 to 295 are extracellular; the sequence is NLRVEDTITICVNFYQADH. Residues 296 to 316 traverse the membrane as a helical segment; that stretch reads LFIPAIMNSFQTLAWGIALIV. The Cytoplasmic segment spans residues 317–362; it reads DPLCALLFDPRIRKVWVEHVSRLSIIIGRSFEACCHSNLNKEIQDK.

Belongs to the G-protein coupled receptor 1 family. B0244 subfamily.

Its subcellular location is the cell membrane. The polypeptide is Putative G-protein coupled receptor B0244.5 (Caenorhabditis elegans).